We begin with the raw amino-acid sequence, 633 residues long: Pesticidal crystal protein Cry2Aa (633 aa).

This sequence belongs to the delta endotoxin family.

Its function is as follows. Promotes colloidosmotic lysis by binding to the midgut epithelial cells of both dipteran (Aedes aegypti) and lepidopteran (Manduca sexta) larvae. The chain is Pesticidal crystal protein Cry2Aa (cry2Aa) from Bacillus thuringiensis subsp. kenyae.